Reading from the N-terminus, the 235-residue chain is Segregation and condensation protein A (235 aa).

The protein belongs to the ScpA family. Component of a cohesin-like complex composed of ScpA, ScpB and the Smc homodimer, in which ScpA and ScpB bind to the head domain of Smc. The presence of the three proteins is required for the association of the complex with DNA.

Its subcellular location is the cytoplasm. Functionally, participates in chromosomal partition during cell division. May act via the formation of a condensin-like complex containing Smc and ScpB that pull DNA away from mid-cell into both cell halves. The sequence is that of Segregation and condensation protein A from Streptococcus uberis (strain ATCC BAA-854 / 0140J).